A 562-amino-acid chain; its full sequence is NAD-dependent malic enzyme (562 aa).

Tyrosine 101 functions as the Proton donor in the catalytic mechanism. Arginine 154 contributes to the NAD(+) binding site. Catalysis depends on lysine 172, which acts as the Proton acceptor. A divalent metal cation-binding residues include glutamate 243, aspartate 244, and aspartate 267. NAD(+)-binding residues include aspartate 267 and asparagine 415.

Belongs to the malic enzymes family. As to quaternary structure, homotetramer. Mg(2+) is required as a cofactor. It depends on Mn(2+) as a cofactor.

The enzyme catalyses (S)-malate + NAD(+) = pyruvate + CO2 + NADH. It catalyses the reaction oxaloacetate + H(+) = pyruvate + CO2. In Colwellia psychrerythraea (strain 34H / ATCC BAA-681) (Vibrio psychroerythus), this protein is NAD-dependent malic enzyme.